We begin with the raw amino-acid sequence, 73 residues long: UPF0346 protein BLi02292/BL01432 (73 aa).

The protein belongs to the UPF0346 family.

The sequence is that of UPF0346 protein BLi02292/BL01432 from Bacillus licheniformis (strain ATCC 14580 / DSM 13 / JCM 2505 / CCUG 7422 / NBRC 12200 / NCIMB 9375 / NCTC 10341 / NRRL NRS-1264 / Gibson 46).